The primary structure comprises 130 residues: 3-hydroxyisobutyrate dehydrogenase, mitochondrial (130 aa).

NAD(+) contacts are provided by residues 1-17 (TPVG…PMAK), 25-26 (LP), and N30. N6-acetyllysine is present on K43. K47 carries the N6-acetyllysine; alternate modification. Position 47 is an N6-succinyllysine; alternate (K47). K101 carries the post-translational modification N6-succinyllysine.

Belongs to the HIBADH-related family. 3-hydroxyisobutyrate dehydrogenase subfamily. As to quaternary structure, homodimer.

It is found in the mitochondrion. The enzyme catalyses 3-hydroxy-2-methylpropanoate + NAD(+) = 2-methyl-3-oxopropanoate + NADH + H(+). The protein operates within amino-acid degradation; L-valine degradation. In Mesocricetus auratus (Golden hamster), this protein is 3-hydroxyisobutyrate dehydrogenase, mitochondrial.